Consider the following 256-residue polypeptide: Rhamnolipids biosynthesis 3-oxoacyl-[acyl-carrier-protein] reductase (256 aa).

Residue 14-38 participates in NADP(+) binding; the sequence is VTGGSRGIGQMIAQGLLEAGARVFI. Ser148 is a binding site for substrate. Tyr162 functions as the Proton acceptor in the catalytic mechanism.

The protein belongs to the short-chain dehydrogenases/reductases (SDR) family.

The catalysed reaction is a (3R)-hydroxyacyl-[ACP] + NADP(+) = a 3-oxoacyl-[ACP] + NADPH + H(+). The protein operates within lipid metabolism; rhamnolipid biosynthesis. Functionally, required for the synthesis of the beta-hydroxy acid moiety of rhamnolipids. The sequence is that of Rhamnolipids biosynthesis 3-oxoacyl-[acyl-carrier-protein] reductase (rhlG) from Pseudomonas aeruginosa (strain ATCC 15692 / DSM 22644 / CIP 104116 / JCM 14847 / LMG 12228 / 1C / PRS 101 / PAO1).